Consider the following 1083-residue polypeptide: RecBCD enzyme subunit RecB (1083 aa).

Residues 1-323 enclose the UvrD-like helicase ATP-binding domain; that stretch reads MKVFDLLGPL…QTLGTNWRSD (323 aa). The interval 1-704 is DNA-binding and helicase activity, interacts with RecC; it reads MKVFDLLGPL…RGRAPGEAIV (704 aa). Residue 21–28 coordinates ATP; it reads ASAGTGKT. Residues 349–607 form the UvrD-like helicase C-terminal domain; sequence VQARHQGHRL…QIMTVWVSKG (259 aa). Positions 765-1083 are nuclease activity, interacts with RecD and RecA; sequence AWKRTSYSGL…LSKLLDAEAP (319 aa). Mg(2+) is bound by residues histidine 830, aspartate 962, and aspartate 975. The active-site For nuclease activity is aspartate 975.

This sequence belongs to the helicase family. UvrD subfamily. In terms of assembly, heterotrimer of RecB, RecC and RecD. All subunits contribute to DNA-binding. Interacts with RecA. Mg(2+) serves as cofactor.

It carries out the reaction Exonucleolytic cleavage (in the presence of ATP) in either 5'- to 3'- or 3'- to 5'-direction to yield 5'-phosphooligonucleotides.. It catalyses the reaction Couples ATP hydrolysis with the unwinding of duplex DNA by translocating in the 3'-5' direction.. The enzyme catalyses ATP + H2O = ADP + phosphate + H(+). A helicase/nuclease that prepares dsDNA breaks (DSB) for recombinational DNA repair. Binds to DSBs and unwinds DNA via a highly rapid and processive ATP-dependent bidirectional helicase activity. Holoenzyme degrades any linearized DNA that is unable to undergo homologous recombination. In the holoenzyme this subunit contributes DNA-dependent ATPase activity, exonuclease activity and 3'-5' helicase activity. Unlike the case in E.coli, suppresses RecA-dependent homologous recombination, is instead required for single-strand annealing pathway repair of DSB. This chain is RecBCD enzyme subunit RecB, found in Mycolicibacterium smegmatis (strain ATCC 700084 / mc(2)155) (Mycobacterium smegmatis).